The sequence spans 81 residues: Sulfur carrier protein TusA (81 aa).

Residue C19 is the Cysteine persulfide intermediate of the active site.

The protein belongs to the sulfur carrier protein TusA family. In terms of assembly, interacts with IscS.

The protein localises to the cytoplasm. It participates in tRNA modification. Sulfur carrier protein involved in sulfur trafficking in the cell. Part of a sulfur-relay system required for 2-thiolation during synthesis of 2-thiouridine of the modified wobble base 5-methylaminomethyl-2-thiouridine (mnm(5)s(2)U) in tRNA. Interacts with IscS and stimulates its cysteine desulfurase activity. Accepts an activated sulfur from IscS, which is then transferred to TusD, and thus determines the direction of sulfur flow from IscS to 2-thiouridine formation. Also appears to be involved in sulfur transfer for the biosynthesis of molybdopterin. The chain is Sulfur carrier protein TusA from Enterobacter sp. (strain 638).